Consider the following 319-residue polypeptide: Transcription factor STKL2 (319 aa).

The segment at 1–119 (MAPLESPATA…NKKANPQRVW (119 aa)) is disordered. A compositionally biased stretch (basic and acidic residues) spans 21 to 34 (EIFKSSSEESKPKD). Polar residues predominate over residues 38–55 (VPSSKTLKSPSAAVNSKT). Residues 89–112 (RAGEGSTSRDMHVKRVKKEDDNKK) are compositionally biased toward basic and acidic residues.

Belongs to the GeBP family. As to expression, expressed strongly in leaves and flowers, weakly in roots, and very weakly in stems.

It localises to the nucleus. Functionally, transcription repressor that binds DNA in a sequence-specific manner, 5'-GCCT-3', to regulate the expression of PGR. Acts as a modulatory component for the glucose-triggered developmental leaf growth process. This Arabidopsis thaliana (Mouse-ear cress) protein is Transcription factor STKL2.